We begin with the raw amino-acid sequence, 348 residues long: VIP36-like protein (348 aa).

The N-terminal stretch at 1–38 (MAATLGPLGSWQQWRRCLLARDGSRMLLLLLLLGSGQG) is a signal peptide. Over 39–313 (PQQVGAGQTF…APLPPLSGLA (275 aa)) the chain is Lumenal. The region spanning 49–274 (EYLKREHSLS…DVISLKLFEL (226 aa)) is the L-type lectin-like domain. Residues serine 93 and aspartate 128 each coordinate a carbohydrate. Ca(2+) is bound by residues aspartate 159, tyrosine 161, and asparagine 163. A carbohydrate is bound at residue 161-163 (YPN). N-linked (GlcNAc...) asparagine glycosylation is present at asparagine 181. Histidine 188 lines the a carbohydrate pocket. Aspartate 191 contributes to the Ca(2+) binding site. A disulfide bridge connects residues cysteine 200 and cysteine 237. 258–260 (GDL) lines the a carbohydrate pocket. Residues 314 to 334 (LFHIVFFSLVIFVFAIVIGII) form a helical membrane-spanning segment. The Cytoplasmic portion of the chain corresponds to 335 to 348 (LYNKWQEQSRKRFY). The short motif at 344–346 (RKR) is the Endoplasmic reticulum retention signal element.

It is found in the endoplasmic reticulum membrane. It localises to the golgi apparatus membrane. May be involved in the regulation of export from the endoplasmic reticulum of a subset of glycoproteins. May function as a regulator of ERGIC-53. The chain is VIP36-like protein (LMAN2L) from Pongo abelii (Sumatran orangutan).